We begin with the raw amino-acid sequence, 331 residues long: Putative heat stress transcription factor A-6a (331 aa).

A disordered region spans residues 135–160 (RRGAGTGSTTPRAVNCGGGGGEGEVE). A coiled-coil region spans residues 156-238 (EGEVERLRRD…VERKKRRMLA (83 aa)). The segment at 162 to 212 (LRRDKEALARELARLRRQQQEARAQLLDMERRVRGTERRQEQCTEFLARAL) is hydrophobic repeat HR-A/B. A Nuclear localization signal motif is present at residues 230 to 235 (ERKKRR). The Nuclear export signal signature appears at 246–253 (LTFEALAL). Positions 270–279 (DMIWYELLGE) match the AHA1 motif. Positions 305–313 (AEPWEEMGE) match the AHA2 motif.

This sequence belongs to the HSF family. Class A subfamily. Homotrimer. Post-translationally, exhibits temperature-dependent phosphorylation.

The protein localises to the cytoplasm. Its subcellular location is the nucleus. Functionally, transcriptional regulator that specifically binds DNA of heat shock promoter elements (HSE). This Oryza sativa subsp. japonica (Rice) protein is Putative heat stress transcription factor A-6a (HSFA6A).